The primary structure comprises 299 residues: Phosphatidylserine decarboxylase proenzyme (299 aa).

Residues Asp115, His171, and Ser258 each act as charge relay system; for autoendoproteolytic cleavage activity in the active site. Ser258 (schiff-base intermediate with substrate; via pyruvic acid; for decarboxylase activity) is an active-site residue. Ser258 is subject to Pyruvic acid (Ser); by autocatalysis.

The protein belongs to the phosphatidylserine decarboxylase family. PSD-B subfamily. Prokaryotic type II sub-subfamily. As to quaternary structure, heterodimer of a large membrane-associated beta subunit and a small pyruvoyl-containing alpha subunit. It depends on pyruvate as a cofactor. Post-translationally, is synthesized initially as an inactive proenzyme. Formation of the active enzyme involves a self-maturation process in which the active site pyruvoyl group is generated from an internal serine residue via an autocatalytic post-translational modification. Two non-identical subunits are generated from the proenzyme in this reaction, and the pyruvate is formed at the N-terminus of the alpha chain, which is derived from the carboxyl end of the proenzyme. The autoendoproteolytic cleavage occurs by a canonical serine protease mechanism, in which the side chain hydroxyl group of the serine supplies its oxygen atom to form the C-terminus of the beta chain, while the remainder of the serine residue undergoes an oxidative deamination to produce ammonia and the pyruvoyl prosthetic group on the alpha chain. During this reaction, the Ser that is part of the protease active site of the proenzyme becomes the pyruvoyl prosthetic group, which constitutes an essential element of the active site of the mature decarboxylase.

It localises to the cell membrane. The enzyme catalyses a 1,2-diacyl-sn-glycero-3-phospho-L-serine + H(+) = a 1,2-diacyl-sn-glycero-3-phosphoethanolamine + CO2. It functions in the pathway phospholipid metabolism; phosphatidylethanolamine biosynthesis; phosphatidylethanolamine from CDP-diacylglycerol: step 2/2. Its function is as follows. Catalyzes the formation of phosphatidylethanolamine (PtdEtn) from phosphatidylserine (PtdSer). The protein is Phosphatidylserine decarboxylase proenzyme of Chlamydia felis (strain Fe/C-56) (Chlamydophila felis).